A 112-amino-acid chain; its full sequence is UPF0122 protein CPE1714 (112 aa).

The protein belongs to the UPF0122 family.

Its function is as follows. Might take part in the signal recognition particle (SRP) pathway. This is inferred from the conservation of its genetic proximity to ftsY/ffh. May be a regulatory protein. This Clostridium perfringens (strain 13 / Type A) protein is UPF0122 protein CPE1714.